A 256-amino-acid polypeptide reads, in one-letter code: Floral homeotic protein APETALA 1 (256 aa).

The MADS-box domain maps to 1–61 (MGRGRVQLKR…GKLFEYSTDS (61 aa)). Residues 88-178 (NTNWSMEYNR…SKQIKEREKI (91 aa)) form the K-box domain. The stretch at 88-185 (NTNWSMEYNR…EKILRAQQEQ (98 aa)) forms a coiled coil.

Homodimer capable of binding to CArG-box sequences. Heterodimer with SEP3, AP1 and SVP. Binds AP3/PI to form a ternary complex. Interacts with the SEU-LUG corepressor complex when complexed to AGL24 or SVP. Interacts with AGL15 and AGL16. Interacts with TT16/AGL32. As to expression, expressed in young flower primordia, later becomes localized to sepals and petals.

The protein resides in the nucleus. Transcription factor that promotes early floral meristem identity in synergy with LEAFY. Is required subsequently for the transition of an inflorescence meristem into a floral meristem. Is indispensable for normal development of sepals and petals in flowers. Positively regulates the B class homeotic proteins APETALA3 and PISTILLATA with the cooperation of LEAFY and UFO. Interacts with SEPALLATA3 or AP3/PI heterodimer to form complexes that could be involved in genes regulation during floral meristem development. Positively regulates AGAMOUS in cooperation with LEAFY. Displays a redundant function with CAULIFLOWER in the up-regulation of LEAFY. Together with AGL24 and SVP, controls the identity of the floral meristem and regulates expression of class B, C and E genes. Represses flowering time genes AGL24, SVP and SOC1 in emerging floral meristems. The polypeptide is Floral homeotic protein APETALA 1 (AP1) (Arabidopsis thaliana (Mouse-ear cress)).